We begin with the raw amino-acid sequence, 521 residues long: Ankyrin repeat and death domain-containing protein 1B (521 aa).

ANK repeat units lie at residues 60-89, 93-122, 126-155, 159-190, 194-223, 227-256, 260-289, 293-322, 326-355, and 359-388; these read AIER…NINA, MNRT…RVDV, HGLT…DQRA, EGMN…DLNQ, RGRK…HTSE, DGNT…EVNE, LNVS…DLQQ, SKEP…DVDV, RRQT…NLKI, and QGKT…YYAW. The Death domain occupies 420–508; that stretch reads TLLWNLAYRQ…ELAEKIRQFK (89 aa).

In Mus musculus (Mouse), this protein is Ankyrin repeat and death domain-containing protein 1B (Ankdd1b).